A 56-amino-acid chain; its full sequence is Ovomucoid (56 aa).

Positions 6 to 56 constitute a Kazal-like domain; it reads VDCSEYPKPDCTLEYRPLCGSDNKTYANKCNFCNAVVESNGTLTLSHFGKC. Intrachain disulfides connect Cys-8–Cys-38, Cys-16–Cys-35, and Cys-24–Cys-56. Residue Asn-45 is glycosylated (N-linked (GlcNAc...) asparagine).

Its subcellular location is the secreted. The polypeptide is Ovomucoid (Callipepla squamata castanogastris (Chestnut bellied scaled quail)).